The sequence spans 188 residues: MTRPISFVTGNAKKLEEVRAILGPKFPRELLPVKLDLPELQGEIDDICRKKCLEAARRVKGPVLVEDTCLCFNALKGLPGPYIKWFLEKLEPEGLHKLLDGWEDKSAEAVCTFAYAPGEDAEVILFQGRTQGDIVYPRGCRDFGWDPIFQPKGYDKSYAELPKEKKNEISHRFRALNKLRDYFVAENQ.

9 to 14 (TGNAKK) lines the ITP pocket. Position 39 (glutamate 39) interacts with Mg(2+). ITP-binding positions include lysine 51, 67 to 68 (DT), lysine 84, 143 to 146 (FGWD), lysine 166, and 171 to 172 (HR).

This sequence belongs to the HAM1 NTPase family. Homodimer. Mg(2+) is required as a cofactor. The cofactor is Mn(2+).

It is found in the cytoplasm. The enzyme catalyses ITP + H2O = IMP + diphosphate + H(+). It carries out the reaction dITP + H2O = dIMP + diphosphate + H(+). It catalyses the reaction XTP + H2O = XMP + diphosphate + H(+). In terms of biological role, pyrophosphatase that hydrolyzes non-canonical purine nucleotides such as inosine triphosphate (ITP), deoxyinosine triphosphate (dITP) or xanthosine 5'-triphosphate (XTP) to their respective monophosphate derivatives. The enzyme does not distinguish between the deoxy- and ribose forms. Probably excludes non-canonical purines from RNA and DNA precursor pools, thus preventing their incorporation into RNA and DNA and avoiding chromosomal lesions. This Aedes aegypti (Yellowfever mosquito) protein is Inosine triphosphate pyrophosphatase.